A 341-amino-acid polypeptide reads, in one-letter code: Krueppel-like factor 17 (341 aa).

Residues 214-252 are disordered; it reads VTESNTQEEPFVREPPTPAPEGAESPSTSRGATRRQSPV. Residues 238–252 show a composition bias toward polar residues; sequence SPSTSRGATRRQSPV. 3 consecutive C2H2-type zinc fingers follow at residues 256–280, 286–310, and 316–338; these read YVCTYNSCGKSYTKRSHLVSHQRKH, FACDWNGCTWKFFRSDELGRHKRIH, and HKCDECDREFMRSDHLRQHKRTH.

It belongs to the Sp1 C2H2-type zinc-finger protein family. In terms of tissue distribution, exclusively expressed in testis and ovary. Localized to step 3-8 spermatids in testis and growing oocytes in ovary.

It is found in the nucleus. Its function is as follows. Transcription repressor that binds to the promoter of target genes and prevents their expression. Acts as a negative regulator of epithelial-mesenchymal transition and metastasis in breast cancer. Specifically binds the 5'-CACCC-3' sequence in the promoter of ID1, a key metastasis regulator in breast cancer, and repress its expression. May be a germ cell-specific transcription factor that plays important roles in spermatid differentiation and oocyte development. The chain is Krueppel-like factor 17 (Klf17) from Mus musculus (Mouse).